Consider the following 430-residue polypeptide: MKITINQASEFVGKEVTIGAWLANKRSSGKIAFLQLRDGTGFMQGVVVKAEVGDDIFATAKALTQETSLYVTGTINEDTRSPFGYEMAVSGVEVISESHDYPITPKEHGTEFLMDHRHLWLRSNRQHAIMKIRNEIIRASYEFFNKEGFLKIDPPILTGSAPEGTTELFHTKYFDEDAFLSQSGQLYMEAAAMAFGKVFSFGPTFRAEKSKTRRHLIEFWMIEPEMAFYKLEDSLQVQENYVAFLVKAVLDNCRLELDRLGRDVSHLEKMVAPFPRITYTEAIERLHELGFDDIVWGDDFGAPHETAIADSFEKPVFITHYPKAIKPFYMPEDPENDQVVLCADMIAPEGYGEIIGGSERIHDLETLQARMEDFDLDQEAYSWYLDLARYGSVPHSGFGLGLERTVAWISGTEHVRETIPFPRLLNRLYP.

Belongs to the class-II aminoacyl-tRNA synthetase family. As to quaternary structure, homodimer.

The protein resides in the cytoplasm. The catalysed reaction is tRNA(Asn) + L-asparagine + ATP = L-asparaginyl-tRNA(Asn) + AMP + diphosphate + H(+). The sequence is that of Asparagine--tRNA ligase from Listeria monocytogenes serotype 4b (strain F2365).